A 509-amino-acid chain; its full sequence is Solute carrier family 2, facilitated glucose transporter member 4 (509 aa).

Residues 1-24 are Cytoplasmic-facing; it reads MPSGFQQIGSEDGEPPQQRVTGTL. An interaction with SRFBP1 region spans residues 7–13; it reads QIGSEDG. Serine 10 is subject to Phosphoserine. The chain crosses the membrane as a helical span at residues 25–45; that stretch reads VLAVFSAVLGSLQFGYNIGVI. Residues 46–81 lie on the Extracellular side of the membrane; it reads NAPQKVIEQSYNETWLGRQGPEGPSSIPPGTLTTLW. N-linked (GlcNAc...) asparagine glycosylation is present at asparagine 57. A helical membrane pass occupies residues 82 to 102; that stretch reads ALSVAIFSVGGMISSFLIGII. The Cytoplasmic portion of the chain corresponds to 103-111; the sequence is SQWLGRKRA. A helical membrane pass occupies residues 112 to 132; that stretch reads MLVNNVLAVLGGSLMGLANAA. Residues 133 to 142 are Extracellular-facing; the sequence is ASYEMLILGR. The chain crosses the membrane as a helical span at residues 143 to 163; it reads FLIGAYSGLTSGLVPMYVGEI. At 164–171 the chain is on the cytoplasmic side; the sequence is APTHLRGA. The chain crosses the membrane as a helical span at residues 172 to 192; sequence LGTLNQLAIVIGILIAQVLGL. Glutamine 177 contacts D-glucose. Over 193–201 the chain is Extracellular; it reads ESLLGTASL. Residues 202–222 traverse the membrane as a helical segment; the sequence is WPLLLGLTVLPALLQLVLLPF. Cysteine 223 is lipidated: S-palmitoyl cysteine. Residues 223-287 are Cytoplasmic-facing; it reads CPESPRYLYI…LLGSRTHRQP (65 aa). Residue serine 274 is modified to Phosphoserine; by SGK1. A helical membrane pass occupies residues 288–308; the sequence is LIIAVVLQLSQQLSGINAVFY. Residues 298-299 and asparagine 304 contribute to the D-glucose site; that span reads QQ. Over 309 to 323 the chain is Extracellular; the sequence is YSTSIFETAGVGQPA. Residues 324–344 form a helical membrane-spanning segment; the sequence is YATIGAGVVNTVFTLVSVLLV. Residue asparagine 333 coordinates D-glucose. The Cytoplasmic portion of the chain corresponds to 345–353; it reads ERAGRRTLH. A helical transmembrane segment spans residues 354-374; the sequence is LLGLAGMCGCAILMTVALLLL. Topologically, residues 375–384 are extracellular; sequence ERVPAMSYVS. A helical membrane pass occupies residues 385 to 405; sequence IVAIFGFVAFFEIGPGPIPWF. 2 residues coordinate D-glucose: glutamate 396 and tryptophan 404. At 406–417 the chain is on the cytoplasmic side; it reads IVAELFSQGPRP. Residues 418–438 form a helical membrane-spanning segment; the sequence is AAMAVAGFSNWTSNFIIGMGF. Residues 439-445 are Extracellular-facing; that stretch reads QYVAEAM. The helical transmembrane segment at 446–466 threads the bilayer; sequence GPYVFLLFAVLLLGFFIFTFL. Over 467-509 the chain is Cytoplasmic; that stretch reads RVPETRGRTFDQISAAFHRTPSLLEQEVKPSTELEYLGPDEND. Position 486 is a phosphothreonine (threonine 486). Serine 488 bears the Phosphoserine mark. A Dileucine internalization motif motif is present at residues 489–490; sequence LL.

It belongs to the major facilitator superfamily. Sugar transporter (TC 2.A.1.1) family. Glucose transporter subfamily. In terms of assembly, interacts with NDUFA9. Binds to DAXX. Interacts via its N-terminus with SRFBP1. Interacts with TRARG1; the interaction is required for proper SLC2A4 recycling after insulin stimulation. In terms of processing, sumoylated. Palmitoylated. Palmitoylation by ZDHHC7 controls the insulin-dependent translocation of GLUT4 to the plasma membrane. As to expression, skeletal and cardiac muscles; brown and white fat.

It is found in the cell membrane. It localises to the endomembrane system. The protein localises to the cytoplasm. The protein resides in the perinuclear region. The enzyme catalyses D-glucose(out) = D-glucose(in). In terms of biological role, insulin-regulated facilitative glucose transporter, which plays a key role in removal of glucose from circulation. Response to insulin is regulated by its intracellular localization: in the absence of insulin, it is efficiently retained intracellularly within storage compartments in muscle and fat cells. Upon insulin stimulation, translocates from these compartments to the cell surface where it transports glucose from the extracellular milieu into the cell. The sequence is that of Solute carrier family 2, facilitated glucose transporter member 4 from Homo sapiens (Human).